A 335-amino-acid chain; its full sequence is Protein-arginine N-acetylglucosaminyltransferase SseK3 (335 aa).

Residues 51 to 53 (QWF) and Tyr75 each bind UDP-N-acetyl-alpha-D-glucosamine. Residues Arg153 and Arg184 are each glycosylated (N-beta-linked (GlcNAc) arginine; by autocatalysis). 224–227 (YLDA) is a binding site for UDP-N-acetyl-alpha-D-glucosamine. Positions 226-228 (DAD) match the DXD motif motif. Asp228 lines the Mn(2+) pocket. Catalysis depends on Glu258, which acts as the Proton acceptor. Residue Arg305 is glycosylated (N-beta-linked (GlcNAc) arginine; by autocatalysis). Mn(2+)-binding residues include Asp325 and Ser327. Residues Ser327 and 332–335 (SSWR) each bind UDP-N-acetyl-alpha-D-glucosamine. Arg335 carries an N-beta-linked (GlcNAc) arginine; by autocatalysis glycan.

This sequence belongs to the glycosyltransferase NleB family. Interacts with host TRIM32; without mediating its GlcNAcylation. Mn(2+) serves as cofactor. Auto-glycosylated: arginine GlcNAcylation is required for activity toward death domain-containing host target proteins.

It localises to the secreted. Its subcellular location is the host Golgi apparatus. It catalyses the reaction L-arginyl-[protein] + UDP-N-acetyl-alpha-D-glucosamine = N(omega)-(N-acetyl-beta-D-glucosaminyl)-L-arginyl-[protein] + UDP + H(+). Functionally, protein-arginine N-acetylglucosaminyltransferase effector that disrupts TNF signaling in infected cells, including NF-kappa-B signaling and apoptosis. Acts by catalyzing the transfer of a single N-acetylglucosamine (GlcNAc) to a conserved arginine residue in the death domain of host proteins such as TRADD, TNFRSF1A/TNFR1 and TNFRSF10B/TRAILR2: arginine GlcNAcylation prevents homotypic/heterotypic death domain interactions and assembly of the oligomeric TNF-alpha receptor complex, thereby disrupting TNF signaling. Also acts on host proteins without a death domain: catalyzes arginine GlcNAcylation of host small Rab GTPase (Rab1, Rab5 and Rab11), thereby preventing GTPase activity and leading to impaired host vesicular protein transport. Also mediates auto-GlcNAcylation, which is required for activity toward death domain-containing host target proteins. The protein is Protein-arginine N-acetylglucosaminyltransferase SseK3 of Salmonella typhimurium (strain SL1344).